The sequence spans 69 residues: Cold shock-like protein CspE (69 aa).

The 61-residue stretch at 6–66 (GNVKWFNESK…GAKGPSAANV (61 aa)) folds into the CSD domain.

The protein resides in the cytoplasm. The chain is Cold shock-like protein CspE (cspE) from Escherichia coli O6:H1 (strain CFT073 / ATCC 700928 / UPEC).